The sequence spans 84 residues: Putative membrane protein insertion efficiency factor (84 aa).

The tract at residues 60–84 is disordered; that stretch reads WSQPGEDPVPDHFSLKRNDTRKQSH. The segment covering 68 to 84 has biased composition (basic and acidic residues); the sequence is VPDHFSLKRNDTRKQSH.

It belongs to the UPF0161 family.

It is found in the cell membrane. Functionally, could be involved in insertion of integral membrane proteins into the membrane. The chain is Putative membrane protein insertion efficiency factor from Streptococcus gordonii (strain Challis / ATCC 35105 / BCRC 15272 / CH1 / DL1 / V288).